We begin with the raw amino-acid sequence, 63 residues long: Adipokinetic prohormone type 1 (63 aa).

Residues 1–22 form the signal peptide; it reads MVQRCLVVALLVVVVAAALCSA. Position 23 is a pyrrolidone carboxylic acid (glutamine 23). Threonine 32 is subject to Threonine amide.

Belongs to the AKH/HRTH/RPCH family. Adipokinetic hormone precursor-related peptide (APRP) can form three type of disulfide-bond dimers: p1 (alpha-alpha), p2 (alpha-beta), and p3 (beta-beta).

Its subcellular location is the secreted. In terms of biological role, this hormone, released from cells in the corpora cardiaca, causes release of diglycerides from the fat body and stimulation of muscles to use these diglycerides as an energy source during energy-demanding processes. This chain is Adipokinetic prohormone type 1, found in Schistocerca gregaria (Desert locust).